A 128-amino-acid chain; its full sequence is Cytochrome c-type biogenesis protein CcmE (128 aa).

The Cytoplasmic segment spans residues 1–8 (MQKRVRNR). The helical; Signal-anchor for type II membrane protein transmembrane segment at 9–29 (LITIIICFCSAFLGISIILYN) threads the bilayer. At 30 to 128 (LEKNIVFFLP…KHDENYRPPQ (99 aa)) the chain is on the periplasmic side. 2 residues coordinate heme: H120 and Y124.

This sequence belongs to the CcmE/CycJ family.

It localises to the cell inner membrane. Its function is as follows. Heme chaperone required for the biogenesis of c-type cytochromes. Transiently binds heme delivered by CcmC and transfers the heme to apo-cytochromes in a process facilitated by CcmF and CcmH. This is Cytochrome c-type biogenesis protein CcmE from Rickettsia rickettsii (strain Iowa).